A 109-amino-acid chain; its full sequence is FK506-binding protein (109 aa).

Residues 20–108 (GKEITVHYTG…IFEVELLKVY (89 aa)) enclose the PPIase FKBP-type domain.

Belongs to the FKBP-type PPIase family.

It catalyses the reaction [protein]-peptidylproline (omega=180) = [protein]-peptidylproline (omega=0). In terms of biological role, PPIases accelerate the folding of proteins. The protein is FK506-binding protein (fbp) of Neisseria meningitidis serogroup C.